Here is a 380-residue protein sequence, read N- to C-terminus: Phospho-N-acetylmuramoyl-pentapeptide-transferase (380 aa).

The next 9 membrane-spanning stretches (helical) occupy residues 25–45 (RAAA…PAII), 70–90 (TTPT…VLLW), 98–118 (VLLA…DDYL), 142–162 (VLCG…TLPG), 173–193 (VLVV…VTFI), 209–229 (GLSS…AYVL), 245–265 (GAGE…GFLW), 272–294 (QVFM…AILL), and 357–377 (QVVV…LSTL).

It belongs to the glycosyltransferase 4 family. MraY subfamily. Mg(2+) serves as cofactor.

The protein resides in the cell inner membrane. It carries out the reaction UDP-N-acetyl-alpha-D-muramoyl-L-alanyl-gamma-D-glutamyl-meso-2,6-diaminopimeloyl-D-alanyl-D-alanine + di-trans,octa-cis-undecaprenyl phosphate = di-trans,octa-cis-undecaprenyl diphospho-N-acetyl-alpha-D-muramoyl-L-alanyl-D-glutamyl-meso-2,6-diaminopimeloyl-D-alanyl-D-alanine + UMP. The protein operates within cell wall biogenesis; peptidoglycan biosynthesis. Its function is as follows. Catalyzes the initial step of the lipid cycle reactions in the biosynthesis of the cell wall peptidoglycan: transfers peptidoglycan precursor phospho-MurNAc-pentapeptide from UDP-MurNAc-pentapeptide onto the lipid carrier undecaprenyl phosphate, yielding undecaprenyl-pyrophosphoryl-MurNAc-pentapeptide, known as lipid I. The polypeptide is Phospho-N-acetylmuramoyl-pentapeptide-transferase (Gemmatimonas aurantiaca (strain DSM 14586 / JCM 11422 / NBRC 100505 / T-27)).